The primary structure comprises 771 residues: GPI mannosyltransferase 3 (771 aa).

Residues 1–47 are disordered; that stretch reads MSSSRRRKSFTSSSSSSSPSFHSPPPTSRLRPRSPPSSNTKTSPTST. Low complexity-rich tracts occupy residues 10 to 21 and 36 to 47; these read FTSSSSSSSPSF and PSSNTKTSPTST. A run of 7 helical transmembrane segments spans residues 49–69, 251–271, 285–305, 341–361, 378–398, 410–430, and 441–461; these read PLAT…AFTV, LSLA…WMGL, AILV…SCVV, YVSQ…LVGL, SLVQ…LSLV, LPSL…PAVI, and LTLI…TIYH. The interval 575–594 is disordered; the sequence is SYLSAQPRPQHPSTTSTNDA.

It belongs to the glycosyltransferase 22 family. PIGB subfamily.

The protein localises to the endoplasmic reticulum membrane. It functions in the pathway glycolipid biosynthesis; glycosylphosphatidylinositol-anchor biosynthesis. Its function is as follows. Mannosyltransferase involved in glycosylphosphatidylinositol-anchor biosynthesis. Transfers the third mannose to Man2-GlcN-acyl-PI during GPI precursor assembly. The protein is GPI mannosyltransferase 3 (gpi10) of Aspergillus fumigatus (strain ATCC MYA-4609 / CBS 101355 / FGSC A1100 / Af293) (Neosartorya fumigata).